The chain runs to 223 residues: Ribose-5-phosphate isomerase A (223 aa).

Substrate contacts are provided by residues Thr-28–Thr-31, Asp-81–Asp-84, and Lys-94–Gly-97. The active-site Proton acceptor is the Glu-103. Lys-121 contributes to the substrate binding site.

Belongs to the ribose 5-phosphate isomerase family. As to quaternary structure, homodimer.

It catalyses the reaction aldehydo-D-ribose 5-phosphate = D-ribulose 5-phosphate. It functions in the pathway carbohydrate degradation; pentose phosphate pathway; D-ribose 5-phosphate from D-ribulose 5-phosphate (non-oxidative stage): step 1/1. Its function is as follows. Catalyzes the reversible conversion of ribose-5-phosphate to ribulose 5-phosphate. The protein is Ribose-5-phosphate isomerase A of Ruthia magnifica subsp. Calyptogena magnifica.